The following is a 95-amino-acid chain: MTITKEKIAAMLSSKLGFSNNLCEEIVHTVFSNILEIAKEQKLTLKNFGSFEVKQKNPRPGINFHTKAPVIIESKKNLRFVPSSKLKALINGSTR.

Belongs to the bacterial histone-like protein family.

The polypeptide is Histone-like DNA-binding protein (Rickettsia montanensis).